The chain runs to 232 residues: Phosphatidylserine decarboxylase proenzyme (232 aa).

The active-site Schiff-base intermediate with substrate; via pyruvic acid is the Ser190. The residue at position 190 (Ser190) is a Pyruvic acid (Ser); by autocatalysis.

Belongs to the phosphatidylserine decarboxylase family. PSD-A subfamily. Heterodimer of a large membrane-associated beta subunit and a small pyruvoyl-containing alpha subunit. The cofactor is pyruvate. In terms of processing, is synthesized initially as an inactive proenzyme. Formation of the active enzyme involves a self-maturation process in which the active site pyruvoyl group is generated from an internal serine residue via an autocatalytic post-translational modification. Two non-identical subunits are generated from the proenzyme in this reaction, and the pyruvate is formed at the N-terminus of the alpha chain, which is derived from the carboxyl end of the proenzyme. The post-translation cleavage follows an unusual pathway, termed non-hydrolytic serinolysis, in which the side chain hydroxyl group of the serine supplies its oxygen atom to form the C-terminus of the beta chain, while the remainder of the serine residue undergoes an oxidative deamination to produce ammonia and the pyruvoyl prosthetic group on the alpha chain.

Its subcellular location is the cell membrane. The enzyme catalyses a 1,2-diacyl-sn-glycero-3-phospho-L-serine + H(+) = a 1,2-diacyl-sn-glycero-3-phosphoethanolamine + CO2. It functions in the pathway phospholipid metabolism; phosphatidylethanolamine biosynthesis; phosphatidylethanolamine from CDP-diacylglycerol: step 2/2. Its function is as follows. Catalyzes the formation of phosphatidylethanolamine (PtdEtn) from phosphatidylserine (PtdSer). The protein is Phosphatidylserine decarboxylase proenzyme of Cereibacter sphaeroides (strain ATCC 17023 / DSM 158 / JCM 6121 / CCUG 31486 / LMG 2827 / NBRC 12203 / NCIMB 8253 / ATH 2.4.1.) (Rhodobacter sphaeroides).